We begin with the raw amino-acid sequence, 188 residues long: Ribosome maturation factor RimM (188 aa).

In terms of domain architecture, PRC barrel spans 96-169; the sequence is DDEFYYADLE…RILIDPMAAG (74 aa).

The protein belongs to the RimM family. In terms of assembly, binds ribosomal protein uS19.

It localises to the cytoplasm. Functionally, an accessory protein needed during the final step in the assembly of 30S ribosomal subunit, possibly for assembly of the head region. Essential for efficient processing of 16S rRNA. May be needed both before and after RbfA during the maturation of 16S rRNA. It has affinity for free ribosomal 30S subunits but not for 70S ribosomes. The sequence is that of Ribosome maturation factor RimM from Agrobacterium fabrum (strain C58 / ATCC 33970) (Agrobacterium tumefaciens (strain C58)).